Reading from the N-terminus, the 643-residue chain is 1-deoxy-D-xylulose-5-phosphate synthase (643 aa).

Thiamine diphosphate-binding positions include histidine 72 and 113–115; that span reads GHA. Aspartate 144 is a Mg(2+) binding site. Thiamine diphosphate is bound by residues 145–146, asparagine 174, tyrosine 287, and glutamate 370; that span reads GA. Residue asparagine 174 participates in Mg(2+) binding.

Belongs to the transketolase family. DXPS subfamily. In terms of assembly, homodimer. It depends on Mg(2+) as a cofactor. The cofactor is thiamine diphosphate.

It catalyses the reaction D-glyceraldehyde 3-phosphate + pyruvate + H(+) = 1-deoxy-D-xylulose 5-phosphate + CO2. It participates in metabolic intermediate biosynthesis; 1-deoxy-D-xylulose 5-phosphate biosynthesis; 1-deoxy-D-xylulose 5-phosphate from D-glyceraldehyde 3-phosphate and pyruvate: step 1/1. Its function is as follows. Catalyzes the acyloin condensation reaction between C atoms 2 and 3 of pyruvate and glyceraldehyde 3-phosphate to yield 1-deoxy-D-xylulose-5-phosphate (DXP). This is 1-deoxy-D-xylulose-5-phosphate synthase from Prochlorococcus marinus (strain SARG / CCMP1375 / SS120).